A 437-amino-acid chain; its full sequence is ATP-dependent protease ATPase subunit HslU (437 aa).

Residues Val18, 60–65 (GCGKTE), Asp250, Glu315, and Arg387 contribute to the ATP site.

This sequence belongs to the ClpX chaperone family. HslU subfamily. A double ring-shaped homohexamer of HslV is capped on each side by a ring-shaped HslU homohexamer. The assembly of the HslU/HslV complex is dependent on binding of ATP.

Its subcellular location is the cytoplasm. ATPase subunit of a proteasome-like degradation complex; this subunit has chaperone activity. The binding of ATP and its subsequent hydrolysis by HslU are essential for unfolding of protein substrates subsequently hydrolyzed by HslV. HslU recognizes the N-terminal part of its protein substrates and unfolds these before they are guided to HslV for hydrolysis. The protein is ATP-dependent protease ATPase subunit HslU of Methylorubrum extorquens (strain PA1) (Methylobacterium extorquens).